The primary structure comprises 406 residues: 5-methylthioadenosine/S-adenosylhomocysteine deaminase (406 aa).

2 residues coordinate Zn(2+): His-55 and His-57. The substrate site is built by Glu-84, Arg-136, Arg-148, and His-173. Position 200 (His-200) interacts with Zn(2+). Substrate-binding residues include Glu-203 and Asp-279. Asp-279 is a Zn(2+) binding site.

Belongs to the metallo-dependent hydrolases superfamily. MTA/SAH deaminase family. Zn(2+) is required as a cofactor.

The catalysed reaction is S-adenosyl-L-homocysteine + H2O + H(+) = S-inosyl-L-homocysteine + NH4(+). It carries out the reaction S-methyl-5'-thioadenosine + H2O + H(+) = S-methyl-5'-thioinosine + NH4(+). Catalyzes the deamination of 5-methylthioadenosine and S-adenosyl-L-homocysteine into 5-methylthioinosine and S-inosyl-L-homocysteine, respectively. Is also able to deaminate adenosine. Adenosine-5-monophosphate (AMP) and S-adenosyl-L-methionine (SAM) are not enzyme substrates. This is 5-methylthioadenosine/S-adenosylhomocysteine deaminase (mtaD) from Thermotoga maritima (strain ATCC 43589 / DSM 3109 / JCM 10099 / NBRC 100826 / MSB8).